Here is a 469-residue protein sequence, read N- to C-terminus: 3-isopropylmalate dehydratase large subunit (469 aa).

C347, C410, and C413 together coordinate [4Fe-4S] cluster.

This sequence belongs to the aconitase/IPM isomerase family. LeuC type 1 subfamily. In terms of assembly, heterodimer of LeuC and LeuD. [4Fe-4S] cluster is required as a cofactor.

It catalyses the reaction (2R,3S)-3-isopropylmalate = (2S)-2-isopropylmalate. The protein operates within amino-acid biosynthesis; L-leucine biosynthesis; L-leucine from 3-methyl-2-oxobutanoate: step 2/4. Functionally, catalyzes the isomerization between 2-isopropylmalate and 3-isopropylmalate, via the formation of 2-isopropylmaleate. The chain is 3-isopropylmalate dehydratase large subunit from Burkholderia orbicola (strain MC0-3).